The sequence spans 147 residues: MVHFTPEDKTNITSVWTKVDVEDVGGESLARLLVVYPWTQRFFDSFGNLSSASAVMGNPKVKAHGKKVLTSFGEGVKNMDNLKGTFAKLSELHCDKLHVDPENFRLLGNVLIIVLASRFGKEFTPEVQASWQKLVSGVSSALGHKYH.

The Globin domain maps to 3–147; that stretch reads HFTPEDKTNI…VSSALGHKYH (145 aa). Phosphoserine occurs at positions 14 and 51. Heme b-binding residues include histidine 64 and histidine 93.

It belongs to the globin family. In terms of tissue distribution, red blood cells.

Functionally, hemoglobin epsilon chain is a beta-type chain found in early embryos. The chain is Hemoglobin subunit epsilon-M (HBE1) from Didelphis virginiana (North American opossum).